The sequence spans 727 residues: Catalase-peroxidase (727 aa).

Residues 95–218 (WHSAGTYRII…LAAVQMGLIY (124 aa)) constitute a cross-link (tryptophyl-tyrosyl-methioninium (Trp-Tyr) (with M-244)). The active-site Proton acceptor is H96. Residues 218 to 244 (YVNPEGPNGEPDVLGAAKDIKESFGKM) constitute a cross-link (tryptophyl-tyrosyl-methioninium (Tyr-Met) (with W-95)). H259 is a binding site for heme b.

It belongs to the peroxidase family. Peroxidase/catalase subfamily. As to quaternary structure, homodimer or homotetramer. Requires heme b as cofactor. Formation of the three residue Trp-Tyr-Met cross-link is important for the catalase, but not the peroxidase activity of the enzyme.

The catalysed reaction is H2O2 + AH2 = A + 2 H2O. It carries out the reaction 2 H2O2 = O2 + 2 H2O. In terms of biological role, bifunctional enzyme with both catalase and broad-spectrum peroxidase activity. This is Catalase-peroxidase from Persephonella marina (strain DSM 14350 / EX-H1).